A 172-amino-acid polypeptide reads, in one-letter code: Lipoprotein signal peptidase (172 aa).

The next 3 helical transmembrane spans lie at 10–30, 68–88, and 98–118; these read LIWL…KAWV, WQLW…AFWL, and SALP…DRLM. Catalysis depends on residues Asp-124 and Asp-142. Residues 138–158 form a helical membrane-spanning segment; the sequence is FNIADSAIVGGAIGIAVFGLF.

This sequence belongs to the peptidase A8 family.

It localises to the cell inner membrane. The enzyme catalyses Release of signal peptides from bacterial membrane prolipoproteins. Hydrolyzes -Xaa-Yaa-Zaa-|-(S,diacylglyceryl)Cys-, in which Xaa is hydrophobic (preferably Leu), and Yaa (Ala or Ser) and Zaa (Gly or Ala) have small, neutral side chains.. It functions in the pathway protein modification; lipoprotein biosynthesis (signal peptide cleavage). In terms of biological role, this protein specifically catalyzes the removal of signal peptides from prolipoproteins. This is Lipoprotein signal peptidase from Xanthomonas axonopodis pv. citri (strain 306).